A 974-amino-acid chain; its full sequence is Cell division control protein 15 (974 aa).

In terms of domain architecture, Protein kinase spans 25–272 (YHLKQVIGRG…ADQLLKHVWI (248 aa)). ATP contacts are provided by residues 31–39 (IGRGSYGVV) and K54. The Proton acceptor role is filled by D146. The tract at residues 360 to 702 (CSLENIADTI…ITAICVEMSL (343 aa)) is self association domain. Positions 554-563 (SSSLPLSSSP) are enriched in low complexity. The tract at residues 554-592 (SSSLPLSSSPTRNSPVNSVQSPSRSPVHSLMATRPSSPM) is disordered. S561 and S567 each carry phosphoserine. The segment covering 564–579 (TRNSPVNSVQSPSRSP) has biased composition (polar residues). The tract at residues 751–974 (TVGSSESHSV…FSVPITTFQT (224 aa)) is auto-inhibitory domain. Residue T870 is modified to Phosphothreonine. The tract at residues 941-974 (AAIGSSPTKDERSNLRSSKDKSDGFSVPITTFQT) is disordered. Residues 948–963 (TKDERSNLRSSKDKSD) show a composition bias toward basic and acidic residues.

Belongs to the protein kinase superfamily. Ser/Thr protein kinase family. In terms of assembly, homodimer. Interacts with TEM1. Post-translationally, phosphorylation by CDK1 reduces the binding to the mother spindle pole body. The extent of phosphorylation gradually increases during cell-cycle progression until some point during late anaphase/telophase when it is rapidly dephosphorylated by CDC14. Phosphorylation inhibits kinase activity and dephosphorylation by CDC14 activates CDC15.

The protein resides in the cytoplasm. The protein localises to the cytoskeleton. It localises to the spindle pole. Its subcellular location is the bud neck. The enzyme catalyses L-seryl-[protein] + ATP = O-phospho-L-seryl-[protein] + ADP + H(+). It catalyses the reaction L-threonyl-[protein] + ATP = O-phospho-L-threonyl-[protein] + ADP + H(+). Kinase activity is inhibited by phosphorylation and activated by dephosphorylation by CDC14. Functionally, protein kinase of the mitotic exit network (MEN) essential for late nuclear division in the mitotic cycle. Promotes mitotic exit by phosphorylating DBF2 and directly switching on DBF2 kinase activity. Involved in the localization of DBF2 and DBF20 to the neck which is necessary to undergo cytokinesis. Plays a role in segregation of chromosomes during recovery from spindle checkpoint activation. Required for spindle pole localization of CDK1 and inactivation of CDC2 kinase activity at the end of mitosis. Required for spindle disassembly after meiosis II and plays a role in spore morphogenesis. The chain is Cell division control protein 15 (CDC15) from Saccharomyces cerevisiae (strain ATCC 204508 / S288c) (Baker's yeast).